Here is a 160-residue protein sequence, read N- to C-terminus: Nucleotide-binding protein VV1636 (160 aa).

Belongs to the YajQ family.

Its function is as follows. Nucleotide-binding protein. This is Nucleotide-binding protein VV1636 from Vibrio vulnificus (strain YJ016).